Reading from the N-terminus, the 310-residue chain is N-acetylmuramic acid 6-phosphate etherase (310 aa).

The 164-residue stretch at 64–227 (ITARLKSKGR…STSVMIKLGK (164 aa)) folds into the SIS domain. The active-site Proton donor is Glu-92. Residue Glu-123 is part of the active site.

This sequence belongs to the GCKR-like family. MurNAc-6-P etherase subfamily. In terms of assembly, homodimer.

The catalysed reaction is N-acetyl-D-muramate 6-phosphate + H2O = N-acetyl-D-glucosamine 6-phosphate + (R)-lactate. It participates in amino-sugar metabolism; N-acetylmuramate degradation. Functionally, specifically catalyzes the cleavage of the D-lactyl ether substituent of MurNAc 6-phosphate, producing GlcNAc 6-phosphate and D-lactate. The sequence is that of N-acetylmuramic acid 6-phosphate etherase from Prochlorococcus marinus (strain NATL1A).